The primary structure comprises 280 residues: Monoacylglycerol lipase (280 aa).

Catalysis depends on serine 111, which acts as the Nucleophile. Catalysis depends on charge relay system residues aspartate 227 and histidine 257.

Belongs to the AB hydrolase superfamily.

It is found in the secreted. The protein resides in the cell wall. The enzyme catalyses Hydrolyzes glycerol monoesters of long-chain fatty acids.. Functionally, contributes to cell growth, probably by hydrolyzing exogenous lipids. Catalyzes the hydrolysis of monoacylglycerols (MAG) with fatty acid chains ranging from C14 to C18, with a maximum activity on monoolein. Is unable to hydrolyze long-chain diacylglycerol (DAG). The polypeptide is Monoacylglycerol lipase (Mycolicibacterium smegmatis (strain ATCC 700084 / mc(2)155) (Mycobacterium smegmatis)).